We begin with the raw amino-acid sequence, 56 residues long: UPF0434 protein CbuK_1382 (56 aa).

It belongs to the UPF0434 family.

The protein is UPF0434 protein CbuK_1382 of Coxiella burnetii (strain CbuK_Q154) (Coxiella burnetii (strain Q154)).